The chain runs to 146 residues: Hemoglobin subunit beta (146 aa).

Val-1 is modified (N-acetylvaline). The Globin domain occupies 2–146 (HLTGEEKSAV…VANALAHKYH (145 aa)). A Phosphothreonine modification is found at Thr-12. The residue at position 44 (Ser-44) is a Phosphoserine. At Lys-59 the chain carries N6-acetyllysine. His-63 is a binding site for heme b. At Lys-82 the chain carries N6-acetyllysine. His-92 contributes to the heme b binding site. Cys-93 bears the S-nitrosocysteine mark. Position 144 is an N6-acetyllysine (Lys-144).

It belongs to the globin family. In terms of assembly, heterotetramer of two alpha chains and two beta chains. In terms of tissue distribution, red blood cells.

Its function is as follows. Involved in oxygen transport from the lung to the various peripheral tissues. The polypeptide is Hemoglobin subunit beta (HBB) (Loris tardigradus (Slender loris)).